Here is a 170-residue protein sequence, read N- to C-terminus: CCHC-type zinc finger nucleic acid binding protein (170 aa).

At Ser-2 the chain carries N-acetylserine. A CCHC-type 1 zinc finger spans residues 4-21; that stretch reads NECFKCGRSGHWARECPT. N6-acetyllysine is present on Lys-8. An omega-N-methylarginine; by PRMT1 mark is found at Arg-25 and Arg-27. The RNA-binding Arg/Gly-rich region (RGG-box) stretch occupies residues 25 to 33; that stretch reads RGRGMRSRG. The residue at position 42 (Ser-42) is a Phosphoserine. CCHC-type zinc fingers lie at residues 45–62, 65–82, 89–106, 110–127, 128–145, and 149–166; these read DICY…DCDL, DACY…DCKE, QCCY…DCDH, QKCY…DCTK, VKCY…NCSK, and VNCY…ECTI. Arg-72 carries the omega-N-methylarginine modification.

As to quaternary structure, associates with the 40S ribosomal subunit, the 80S ribosome and with polysomes. Post-translationally, arginine methylation by PRMT1 in the Arg/Gly-rich region impedes RNA binding.

The protein localises to the nucleus. It localises to the cytoplasm. The protein resides in the endoplasmic reticulum. Its function is as follows. Single-stranded DNA-binding protein that preferentially binds to the sterol regulatory element (SRE) sequence 5'-GTGCGGTG-3', and thereby mediates transcriptional repression. Has a role as transactivator of the Myc promoter. Binds single-stranded RNA in a sequence-specific manner. Binds G-rich elements in target mRNA coding sequences. Prevents G-quadruplex structure formation in vitro, suggesting a role in supporting translation by resolving stable structures on mRNAs. The polypeptide is CCHC-type zinc finger nucleic acid binding protein (CNBP) (Bos taurus (Bovine)).